Reading from the N-terminus, the 788-residue chain is Calpastatin (788 aa).

The segment covering 1 to 11 (MSQPGPKPAAS) has biased composition (pro residues). 3 disordered regions span residues 1–262 (MSQP…TGPV), 289–493 (LLEK…MCSI), and 514–580 (TLAG…SQEQ). Ser11 bears the Phosphoserine mark. A compositionally biased stretch (low complexity) spans 12 to 21 (PRPSRGAAAR). Residues 38–49 (PGEKKGSDEKKA) show a composition bias toward basic and acidic residues. Over residues 65 to 87 (AATATKVTASSAATSKSPSMSTT) the composition is skewed to low complexity. Over residues 99–119 (EGPDQKRPREQAVKTESKKPQ) the composition is skewed to basic and acidic residues. A Glycyl lysine isopeptide (Lys-Gly) (interchain with G-Cter in SUMO2) cross-link involves residue Lys112. Lys129 is subject to N6-acetyllysine. Phosphoserine is present on Ser165. Residue Thr216 is modified to Phosphothreonine. Ser219 is subject to Phosphoserine. Positions 246-256 (GGHEDTNRDDP) are enriched in basic and acidic residues. An Inhibitory domain 1 repeat occupies 251-303 (TNRDDPPYTGPVVLDPMYSTYLEALGIKEGTIPPEYRKLLEKNEGITQPLPDS). Phosphoserine is present on residues Ser303 and Ser324. 2 stretches are compositionally biased toward polar residues: residues 318–328 (SDFTCSSPTGK) and 369–380 (QALQALSDSLGT). One copy of the Inhibitory domain 2 repeat lies at 384–436 (DPPSHVSQAEQVKEAKAKEERQEKCGEDEDTVPAEYRLKPAKDKDGKPLLPEP). Composition is skewed to basic and acidic residues over residues 394–408 (QVKE…QEKC) and 419–430 (YRLKPAKDKDGK). Over residues 441-453 (KSLSESELIGELS) the composition is skewed to low complexity. Ser444, Ser446, and Ser453 each carry phosphoserine. Thr479 bears the Phosphothreonine mark. Phosphoserine is present on Ser518. The segment covering 522–570 (READPEHEKTVEDKVKEKAKEEEHEKLGEKEETVPPDYRLEEVKDKDGK) has biased composition (basic and acidic residues). Residues 524-577 (ADPEHEKTVEDKVKEKAKEEEHEKLGEKEETVPPDYRLEEVKDKDGKPLLPKES) form an Inhibitory domain 3 repeat. Phosphoserine occurs at positions 594, 605, 653, and 655. The interval 620–788 (VVSQTPAPST…PKAKEDARHS (169 aa)) is disordered. The Inhibitory domain 4 repeat unit spans residues 661–714 (PDPDENKPLDDKVKEKIKPEHSEKLGERDDTIPPEYRHLLDNDGKDKPEKPPTK). Composition is skewed to basic and acidic residues over residues 661-726 (PDPD…RDPI) and 759-788 (ASKD…ARHS).

It belongs to the protease inhibitor I27 (calpastatin) family. In terms of tissue distribution, isoform 2 is the major form in all tissues examined. Isoform 1 accounts for 5-10% in tissues such as skeletal muscle, liver and brain, and 30% in myoblasts. Isoforms 4 and 5 are testis-specific. Isoform 6 is highly expressed in heart and skeletal muscle with lower levels in liver, brain and testis. Isoform 7 is expressed at high levels in liver.

Its function is as follows. Specific inhibition of calpain (calcium-dependent cysteine protease). Plays a key role in postmortem tenderization of meat and have been proposed to be involved in muscle protein degradation in living tissue. This Mus musculus (Mouse) protein is Calpastatin (Cast).